Reading from the N-terminus, the 494-residue chain is Guanosine-5'-triphosphate,3'-diphosphate pyrophosphatase (494 aa).

It belongs to the GppA/Ppx family. GppA subfamily.

The enzyme catalyses guanosine 3'-diphosphate 5'-triphosphate + H2O = guanosine 3',5'-bis(diphosphate) + phosphate + H(+). Its pathway is purine metabolism; ppGpp biosynthesis; ppGpp from GTP: step 2/2. In terms of biological role, catalyzes the conversion of pppGpp to ppGpp. Guanosine pentaphosphate (pppGpp) is a cytoplasmic signaling molecule which together with ppGpp controls the 'stringent response', an adaptive process that allows bacteria to respond to amino acid starvation, resulting in the coordinated regulation of numerous cellular activities. This Shigella flexneri protein is Guanosine-5'-triphosphate,3'-diphosphate pyrophosphatase.